Consider the following 202-residue polypeptide: FMN reductase (NADH) RutF (202 aa).

The span at 168–191 (PRAPRGGSAPAEPARGARAIGARP) shows a compositional bias: low complexity. The disordered stretch occupies residues 168–202 (PRAPRGGSAPAEPARGARAIGARPPEGPVLALRSA).

Belongs to the non-flavoprotein flavin reductase family. RutF subfamily.

It catalyses the reaction FMNH2 + NAD(+) = FMN + NADH + 2 H(+). In terms of biological role, catalyzes the reduction of FMN to FMNH2 which is used to reduce pyrimidine by RutA via the Rut pathway. The polypeptide is FMN reductase (NADH) RutF (Methylorubrum populi (strain ATCC BAA-705 / NCIMB 13946 / BJ001) (Methylobacterium populi)).